Consider the following 373-residue polypeptide: Chaperone protein DnaJ (373 aa).

The region spanning 5–70 (DFYATLGVAR…EKRAMYDQYG (66 aa)) is the J domain. Residues 134–212 (GVKKRINIPT…CRGVGRNKAV (79 aa)) form a CR-type zinc finger. Positions 147, 150, 164, 167, 186, 189, 200, and 203 each coordinate Zn(2+). CXXCXGXG motif repeat units lie at residues 147 to 154 (CDVCNGSG), 164 to 171 (CPTCKGSG), 186 to 193 (CPTCRGAG), and 200 to 207 (CVKCRGVG).

It belongs to the DnaJ family. Homodimer. The cofactor is Zn(2+).

It is found in the cytoplasm. Its function is as follows. Participates actively in the response to hyperosmotic and heat shock by preventing the aggregation of stress-denatured proteins and by disaggregating proteins, also in an autonomous, DnaK-independent fashion. Unfolded proteins bind initially to DnaJ; upon interaction with the DnaJ-bound protein, DnaK hydrolyzes its bound ATP, resulting in the formation of a stable complex. GrpE releases ADP from DnaK; ATP binding to DnaK triggers the release of the substrate protein, thus completing the reaction cycle. Several rounds of ATP-dependent interactions between DnaJ, DnaK and GrpE are required for fully efficient folding. Also involved, together with DnaK and GrpE, in the DNA replication of plasmids through activation of initiation proteins. This Neisseria gonorrhoeae (strain ATCC 700825 / FA 1090) protein is Chaperone protein DnaJ.